The following is a 357-amino-acid chain: Uroporphyrinogen decarboxylase (357 aa).

Residues 27–31 (RQAGR), aspartate 77, tyrosine 154, serine 209, and histidine 330 contribute to the substrate site.

The protein belongs to the uroporphyrinogen decarboxylase family. In terms of assembly, homodimer.

The protein localises to the cytoplasm. It catalyses the reaction uroporphyrinogen III + 4 H(+) = coproporphyrinogen III + 4 CO2. The protein operates within porphyrin-containing compound metabolism; protoporphyrin-IX biosynthesis; coproporphyrinogen-III from 5-aminolevulinate: step 4/4. In terms of biological role, catalyzes the decarboxylation of four acetate groups of uroporphyrinogen-III to yield coproporphyrinogen-III. This is Uroporphyrinogen decarboxylase from Acinetobacter baumannii (strain SDF).